A 361-amino-acid polypeptide reads, in one-letter code: sn-glycerol-3-phosphate import ATP-binding protein UgpC (361 aa).

Positions 4 to 235 constitute an ABC transporter domain; that stretch reads VTLRNVRKTY…PATTFVASFI (232 aa). 37–44 is a binding site for ATP; that stretch reads GPSGCGKS.

Belongs to the ABC transporter superfamily. sn-glycerol-3-phosphate importer (TC 3.A.1.1.3) family. In terms of assembly, the complex is composed of two ATP-binding proteins (UgpC), two transmembrane proteins (UgpA and UgpE) and a solute-binding protein (UgpB).

It is found in the cell inner membrane. It carries out the reaction sn-glycerol 3-phosphate(out) + ATP + H2O = sn-glycerol 3-phosphate(in) + ADP + phosphate + H(+). In terms of biological role, part of the ABC transporter complex UgpBAEC involved in sn-glycerol-3-phosphate (G3P) import. Responsible for energy coupling to the transport system. The polypeptide is sn-glycerol-3-phosphate import ATP-binding protein UgpC (Rhodopseudomonas palustris (strain BisA53)).